Reading from the N-terminus, the 114-residue chain is Chaperonin GroEL (114 aa).

Residue 22–26 (DGTTT) coordinates ATP.

The protein belongs to the chaperonin (HSP60) family. In terms of assembly, forms a cylinder of 14 subunits composed of two heptameric rings stacked back-to-back. Interacts with the co-chaperonin GroES.

It is found in the cytoplasm. It catalyses the reaction ATP + H2O + a folded polypeptide = ADP + phosphate + an unfolded polypeptide.. Its function is as follows. Together with its co-chaperonin GroES, plays an essential role in assisting protein folding. The GroEL-GroES system forms a nano-cage that allows encapsulation of the non-native substrate proteins and provides a physical environment optimized to promote and accelerate protein folding. This Mycobacterium ulcerans protein is Chaperonin GroEL.